A 170-amino-acid chain; its full sequence is NADH-quinone oxidoreductase subunit B (170 aa).

[4Fe-4S] cluster-binding residues include cysteine 37, cysteine 38, cysteine 102, and cysteine 131.

Belongs to the complex I 20 kDa subunit family. As to quaternary structure, NDH-1 is composed of 14 different subunits. Subunits NuoB, C, D, E, F, and G constitute the peripheral sector of the complex. [4Fe-4S] cluster is required as a cofactor.

It is found in the cell inner membrane. The enzyme catalyses a quinone + NADH + 5 H(+)(in) = a quinol + NAD(+) + 4 H(+)(out). Its function is as follows. NDH-1 shuttles electrons from NADH, via FMN and iron-sulfur (Fe-S) centers, to quinones in the respiratory chain. The immediate electron acceptor for the enzyme in this species is believed to be ubiquinone. Couples the redox reaction to proton translocation (for every two electrons transferred, four hydrogen ions are translocated across the cytoplasmic membrane), and thus conserves the redox energy in a proton gradient. The protein is NADH-quinone oxidoreductase subunit B of Geotalea uraniireducens (strain Rf4) (Geobacter uraniireducens).